The chain runs to 376 residues: Queuine tRNA-ribosyltransferase (376 aa).

Aspartate 89 acts as the Proton acceptor in catalysis. Substrate contacts are provided by residues 89 to 93 (DSGGF), aspartate 143, glutamine 194, and glycine 221. The segment at 252–258 (GVGTPAN) is RNA binding. Aspartate 271 functions as the Nucleophile in the catalytic mechanism. 4 residues coordinate Zn(2+): cysteine 309, cysteine 311, cysteine 314, and histidine 340.

Belongs to the queuine tRNA-ribosyltransferase family. Homodimer. Within each dimer, one monomer is responsible for RNA recognition and catalysis, while the other monomer binds to the replacement base PreQ1. Zn(2+) is required as a cofactor.

The enzyme catalyses 7-aminomethyl-7-carbaguanine + guanosine(34) in tRNA = 7-aminomethyl-7-carbaguanosine(34) in tRNA + guanine. The protein operates within tRNA modification; tRNA-queuosine biosynthesis. Catalyzes the base-exchange of a guanine (G) residue with the queuine precursor 7-aminomethyl-7-deazaguanine (PreQ1) at position 34 (anticodon wobble position) in tRNAs with GU(N) anticodons (tRNA-Asp, -Asn, -His and -Tyr). Catalysis occurs through a double-displacement mechanism. The nucleophile active site attacks the C1' of nucleotide 34 to detach the guanine base from the RNA, forming a covalent enzyme-RNA intermediate. The proton acceptor active site deprotonates the incoming PreQ1, allowing a nucleophilic attack on the C1' of the ribose to form the product. After dissociation, two additional enzymatic reactions on the tRNA convert PreQ1 to queuine (Q), resulting in the hypermodified nucleoside queuosine (7-(((4,5-cis-dihydroxy-2-cyclopenten-1-yl)amino)methyl)-7-deazaguanosine). The polypeptide is Queuine tRNA-ribosyltransferase (Clostridium kluyveri (strain NBRC 12016)).